Here is a 362-residue protein sequence, read N- to C-terminus: Histidinol-phosphate aminotransferase (362 aa).

Lys-220 carries the post-translational modification N6-(pyridoxal phosphate)lysine.

This sequence belongs to the class-II pyridoxal-phosphate-dependent aminotransferase family. Histidinol-phosphate aminotransferase subfamily. Homodimer. The cofactor is pyridoxal 5'-phosphate.

It catalyses the reaction L-histidinol phosphate + 2-oxoglutarate = 3-(imidazol-4-yl)-2-oxopropyl phosphate + L-glutamate. It functions in the pathway amino-acid biosynthesis; L-histidine biosynthesis; L-histidine from 5-phospho-alpha-D-ribose 1-diphosphate: step 7/9. In Rhodospirillum centenum (strain ATCC 51521 / SW), this protein is Histidinol-phosphate aminotransferase.